The sequence spans 509 residues: Probable cation transporter HKT2;3 (509 aa).

Topologically, residues 1–32 (MPIRLHIFVNSARHAINSSAFICRFIAYHLSP) are cytoplasmic. A run of 2 helical transmembrane segments spans residues 33-53 (LLIH…SLVV) and 96-116 (ILTL…GLVL). Residues 117–164 (ESSKQNKHDPENRRVSSVTVCKQSQLEEATPQTPSMNSIDIKKRCLKY) are Cytoplasmic-facing. 2 helical membrane-spanning segments follow: residues 165 to 185 (LVFV…LLVF) and 237 to 257 (GLLL…PVFL). Topologically, residues 258-296 (RLVIWALRGLRLAKAEEPDFMMNNSSAVGFSHLLPNLQT) are cytoplasmic. 2 helical membrane-spanning segments follow: residues 297–317 (IFLA…FCCL) and 353–373 (CSLV…TPSL). The Cytoplasmic segment spans residues 374–400 (TKLFSACQDHKRIGPESDDRTSKGKPF). The next 2 membrane-spanning stretches (helical) occupy residues 401–421 (LKMM…LVCI) and 474–494 (AYNF…LAML). The Cytoplasmic segment spans residues 495-509 (CGRLNSKDSTSARTR).

The protein belongs to the TrkH potassium transport family. HKT (TC 2.A.38.3) subfamily.

It localises to the membrane. In terms of biological role, probable cation transporter. May be involved in regulation of potassium-sodium homeostasis. This chain is Probable cation transporter HKT2;3, found in Oryza sativa subsp. japonica (Rice).